Reading from the N-terminus, the 206-residue chain is Guanylate kinase (206 aa).

The Guanylate kinase-like domain occupies 6–184; the sequence is GILFILSGPS…AVDKVKTIIK (179 aa). Residue 13-20 coordinates ATP; sequence GPSGVGKG.

Belongs to the guanylate kinase family.

It is found in the cytoplasm. The catalysed reaction is GMP + ATP = GDP + ADP. In terms of biological role, essential for recycling GMP and indirectly, cGMP. The sequence is that of Guanylate kinase from Oceanobacillus iheyensis (strain DSM 14371 / CIP 107618 / JCM 11309 / KCTC 3954 / HTE831).